Here is a 90-residue protein sequence, read N- to C-terminus: Sec-independent protein translocase protein TatAo (90 aa).

The chain crosses the membrane as a helical span at residues 8–28; sequence FPGLPGGPELLIVLLIVVLLF. The segment at 39-90 is disordered; that stretch reads SSGQAMGEFRRGREEIEEELKKGAEGGDDEGENGDEAEADDADATETEAESR. Residues 46–63 show a composition bias toward basic and acidic residues; the sequence is EFRRGREEIEEELKKGAE. Over residues 64 to 90 the composition is skewed to acidic residues; the sequence is GGDDEGENGDEAEADDADATETEAESR.

This sequence belongs to the TatA/E family. In terms of assembly, forms a complex with TatC. Cytoplasmic and membrane-bound TatA form high-molecular-weight complexes.

The protein resides in the cell membrane. It is found in the cytoplasm. Functionally, part of the twin-arginine translocation (Tat) system that transports large folded proteins containing a characteristic twin-arginine motif in their signal peptide across membranes. TatA could form the protein-conducting channel of the Tat system. The polypeptide is Sec-independent protein translocase protein TatAo (Haloferax volcanii (strain ATCC 29605 / DSM 3757 / JCM 8879 / NBRC 14742 / NCIMB 2012 / VKM B-1768 / DS2) (Halobacterium volcanii)).